Consider the following 545-residue polypeptide: Cryptochrome-1 (545 aa).

Residues 3–140 (INNILWFRHG…RCVENVSHTL (138 aa)) form the Photolyase/cryptochrome alpha/beta domain. Residues Arg237, Ser265, Ser267, Gln308, His375, 407–409 (DAD), Cys413, and Asn416 each bind FAD.

It belongs to the DNA photolyase class-1 family. Interacts with tim and per; promoted by light conditions. Requires FAD as cofactor.

It is found in the cytoplasm. The protein resides in the perinuclear region. Its subcellular location is the nucleus. In terms of biological role, blue light-dependent regulator that is the input of the circadian feedback loop. Has no photolyase activity for cyclobutane pyrimidine dimers or 6-4 photoproducts. Regulation of expression by light suggests a role in photoreception for locomotor activity rhythms. Functions, together with per, as a transcriptional repressor required for the oscillation of peripheral circadian clocks and for the correct specification of clock cells. Genes directly activated by the transcription factors Clock (Clk) and cycle (cyc) are repressed by cry. This Anopheles gambiae (African malaria mosquito) protein is Cryptochrome-1.